Here is a 236-residue protein sequence, read N- to C-terminus: Phospholipid hydroperoxide glutathione peroxidase 1, chloroplastic (236 aa).

The segment covering 1–16 has biased composition (low complexity); the sequence is MVSMTTSSSSYGTFST. The interval 1–24 is disordered; sequence MVSMTTSSSSYGTFSTVVNSSRPN. The transit peptide at 1–64 directs the protein to the chloroplast; sequence MVSMTTSSSS…PINPGFLFKS (64 aa). Residue Cys-111 is part of the active site.

Belongs to the glutathione peroxidase family. As to expression, expressed in leaves, stems, flowers, green siliques and seeds.

It is found in the plastid. The protein resides in the chloroplast. The catalysed reaction is a hydroperoxy polyunsaturated fatty acid + 2 glutathione = a hydroxy polyunsaturated fatty acid + glutathione disulfide + H2O. Its function is as follows. Protects cells and enzymes from oxidative damage, by catalyzing the reduction of hydrogen peroxide, lipid peroxides and organic hydroperoxide, by glutathione. The sequence is that of Phospholipid hydroperoxide glutathione peroxidase 1, chloroplastic (GPX1) from Arabidopsis thaliana (Mouse-ear cress).